A 137-amino-acid chain; its full sequence is Large ribosomal subunit protein uL16 (137 aa).

This sequence belongs to the universal ribosomal protein uL16 family. In terms of assembly, part of the 50S ribosomal subunit.

Binds 23S rRNA and is also seen to make contacts with the A and possibly P site tRNAs. The protein is Large ribosomal subunit protein uL16 of Psychrobacter cryohalolentis (strain ATCC BAA-1226 / DSM 17306 / VKM B-2378 / K5).